We begin with the raw amino-acid sequence, 250 residues long: Small ribosomal subunit protein uS3 (250 aa).

Residues 39–107 (VREFLTKNLK…PAQVSINEID (69 aa)) enclose the KH type-2 domain. The interval 215-250 (MNPAPAEERPAKRGRGRGEGQERRGRRGDRAADKGE) is disordered. Basic and acidic residues predominate over residues 220 to 250 (AEERPAKRGRGRGEGQERRGRRGDRAADKGE).

Belongs to the universal ribosomal protein uS3 family. In terms of assembly, part of the 30S ribosomal subunit. Forms a tight complex with proteins S10 and S14.

Binds the lower part of the 30S subunit head. Binds mRNA in the 70S ribosome, positioning it for translation. In Acinetobacter baumannii (strain AB0057), this protein is Small ribosomal subunit protein uS3.